The primary structure comprises 705 residues: Structure-specific endonuclease subunit SLX1 homolog (705 aa).

The region spanning 4–90 (RFHCVYLLTS…TASARLRHAI (87 aa)) is the GIY-YIG domain. Disordered stretches follow at residues 155–192 (RASS…DSKG) and 290–323 (ASFA…RVHT). Composition is skewed to polar residues over residues 160–175 (RVGT…SLQG) and 310–320 (STGSRTPSPQR). Residues 446–526 (CSLCTLPLQP…PSQPCPCPLC (81 aa)) form an SLX1-type zinc finger. Low complexity predominate over residues 595–604 (KGAGEAPGAA). The interval 595–628 (KGAGEAPGAASTVRASTMHVGPARRDAPRVSSPS) is disordered.

This sequence belongs to the SLX1 family. In terms of assembly, forms a heterodimer with a member of the SLX4 family. Requires a divalent metal cation as cofactor.

Its subcellular location is the nucleus. Catalytic subunit of a heterodimeric structure-specific endonuclease that resolves DNA secondary structures generated during DNA repair and recombination. Has endonuclease activity towards branched DNA substrates, introducing single-strand cuts in duplex DNA close to junctions with ss-DNA. This is Structure-specific endonuclease subunit SLX1 homolog from Leishmania infantum.